A 358-amino-acid polypeptide reads, in one-letter code: Protein-glutamate methylesterase/protein-glutamine glutaminase 2 (358 aa).

The Response regulatory domain occupies 8–125 (RVLIVDDSAV…ARGLEGYAEE (118 aa)). The residue at position 59 (Asp59) is a 4-aspartylphosphate. The 196-residue stretch at 157–352 (PMPGSALRFR…LDRVAERLLA (196 aa)) folds into the CheB-type methylesterase domain. Active-site residues include Ser177, His203, and Asp299.

The protein belongs to the CheB family. Phosphorylated by CheA. Phosphorylation of the N-terminal regulatory domain activates the methylesterase activity.

It localises to the cytoplasm. The catalysed reaction is [protein]-L-glutamate 5-O-methyl ester + H2O = L-glutamyl-[protein] + methanol + H(+). It carries out the reaction L-glutaminyl-[protein] + H2O = L-glutamyl-[protein] + NH4(+). In terms of biological role, involved in chemotaxis. Part of a chemotaxis signal transduction system that modulates chemotaxis in response to various stimuli. Catalyzes the demethylation of specific methylglutamate residues introduced into the chemoreceptors (methyl-accepting chemotaxis proteins or MCP) by CheR. Also mediates the irreversible deamidation of specific glutamine residues to glutamic acid. The chain is Protein-glutamate methylesterase/protein-glutamine glutaminase 2 from Xanthomonas oryzae pv. oryzae (strain MAFF 311018).